A 352-amino-acid polypeptide reads, in one-letter code: AP2/ERF and B3 domain-containing transcription factor At1g51120 (352 aa).

The disordered stretch occupies residues 1–20; it reads MDEMSNVAKTTTETSGLTDS. The segment covering 7-20 has biased composition (polar residues); sequence VAKTTTETSGLTDS. The segment at residues 46-103 is a DNA-binding region (AP2/ERF); it reads KFKGVVQQQNGHWGAQIYADHRRIWLGTFKSAHEAAAAYDSASIKLRSFDANSHRNFP. The TF-B3 DNA-binding region spans 178–297; sequence FQKELTPSDV…KTFLMIDVHH (120 aa).

It belongs to the AP2/ERF transcription factor family. RAV subfamily.

The protein localises to the nucleus. In terms of biological role, probably acts as a transcriptional activator. Binds to the GCC-box pathogenesis-related promoter element. May be involved in the regulation of gene expression by stress factors and by components of stress signal transduction pathways. The polypeptide is AP2/ERF and B3 domain-containing transcription factor At1g51120 (Arabidopsis thaliana (Mouse-ear cress)).